The chain runs to 222 residues: Gamma-glutamylcyclotransferase and putative RNase MJ0434 (222 aa).

The active site involves R75. Positions 75-82 match the RX(4)HXY motif motif; sequence RDILIRKY. Residue Y82 is modified to O-di-AMP-tyrosine.

It in the N-terminal section; belongs to the HepT RNase toxin family. In the C-terminal section; belongs to the gamma-glutamylcyclotransferase family. Homodimer, probably forms a complex with cognate antitoxin MJ0435. In terms of processing, modified by cognate antitoxin MJ0435; probably at least 2 successive AMPylation events occur on Tyr-82.

Functionally, probable toxic component of a putative type VII toxin-antitoxin (TA) system, probably an RNase. Probably neutralized by cognate antitoxin MJ0435. Neutralization may be due to AMPylation by MJ0435. The sequence is that of Gamma-glutamylcyclotransferase and putative RNase MJ0434 from Methanocaldococcus jannaschii (strain ATCC 43067 / DSM 2661 / JAL-1 / JCM 10045 / NBRC 100440) (Methanococcus jannaschii).